The following is a 239-amino-acid chain: Purine nucleoside phosphorylase DeoD-type (239 aa).

An a purine D-ribonucleoside-binding site is contributed by His5. Phosphate contacts are provided by residues Gly21, Arg25, Arg44, and 88–91 (RVGS). Residues 180–182 (EME) and 204–205 (SD) each bind a purine D-ribonucleoside. Asp205 functions as the Proton donor in the catalytic mechanism.

Belongs to the PNP/UDP phosphorylase family. In terms of assembly, homohexamer; trimer of homodimers.

The enzyme catalyses a purine D-ribonucleoside + phosphate = a purine nucleobase + alpha-D-ribose 1-phosphate. The catalysed reaction is a purine 2'-deoxy-D-ribonucleoside + phosphate = a purine nucleobase + 2-deoxy-alpha-D-ribose 1-phosphate. Catalyzes the reversible phosphorolytic breakdown of the N-glycosidic bond in the beta-(deoxy)ribonucleoside molecules, with the formation of the corresponding free purine bases and pentose-1-phosphate. The protein is Purine nucleoside phosphorylase DeoD-type of Myxococcus xanthus (strain DK1622).